We begin with the raw amino-acid sequence, 528 residues long: Inositol-3-phosphate synthase (528 aa).

The NAD(+) site is built by glycine 66, glycine 67, asparagine 68, asparagine 69, aspartate 140, glutamine 187, arginine 190, threonine 228, alanine 229, asparagine 230, threonine 231, glycine 279, aspartate 304, serine 307, asparagine 338, asparagine 339, aspartate 340, lysine 353, glycine 392, aspartate 393, aspartate 421, and serine 422.

It belongs to the myo-inositol 1-phosphate synthase family. It depends on NAD(+) as a cofactor.

The protein localises to the cytoplasm. It localises to the cytosol. It carries out the reaction D-glucose 6-phosphate = 1D-myo-inositol 3-phosphate. It functions in the pathway polyol metabolism; myo-inositol biosynthesis; myo-inositol from D-glucose 6-phosphate: step 1/2. Activated by ammonium ions. Its function is as follows. Key enzyme in myo-inositol biosynthesis pathway that catalyzes the conversion of glucose 6-phosphate to 1-myo-inositol 1-phosphate in a NAD-dependent manner. Rate-limiting enzyme in the synthesis of all inositol-containing compounds. De novo-synthesized myo-inositol is essential for incorporation into GPI (glycosylphosphatidylinositol) glycolipids in the bloodstream form. This Trypanosoma brucei brucei protein is Inositol-3-phosphate synthase.